The chain runs to 1115 residues: Carbamoyl phosphate synthase large chain (1115 aa).

The segment at 1–407 (MPRRTDLHHV…ALGKVMRSLE (407 aa)) is carboxyphosphate synthetic domain. ATP contacts are provided by R134, R174, G180, G181, E213, I215, E220, G246, V247, H248, Q290, and E304. Residues 138-333 (KDIVAKAGGE…IAKIAAKLAI (196 aa)) form the ATP-grasp 1 domain. Residues Q290, E304, and N306 each contribute to the Mg(2+) site. Q290, E304, and N306 together coordinate Mn(2+). Positions 408 to 559 (TTRAGFWTAP…ELDPAAETEV (152 aa)) are oligomerization domain. The interval 560-965 (APQTERPKVL…AFAKSQTAAY (406 aa)) is carbamoyl phosphate synthetic domain. An ATP-grasp 2 domain is found at 693 to 884 (GDLLSAAGLP…LAKACARIML (192 aa)). R729, R768, L770, E775, G800, I801, H802, S803, Q843, and E855 together coordinate ATP. The Mg(2+) site is built by Q843, E855, and N857. Positions 843, 855, and 857 each coordinate Mn(2+). The 148-residue stretch at 966 to 1113 (GSLPAQGTVF…QELHRVIGGV (148 aa)) folds into the MGS-like domain. Positions 966 to 1115 (GSLPAQGTVF…LHRVIGGVER (150 aa)) are allosteric domain.

This sequence belongs to the CarB family. Composed of two chains; the small (or glutamine) chain promotes the hydrolysis of glutamine to ammonia, which is used by the large (or ammonia) chain to synthesize carbamoyl phosphate. Tetramer of heterodimers (alpha,beta)4. Requires Mg(2+) as cofactor. Mn(2+) is required as a cofactor.

The catalysed reaction is hydrogencarbonate + L-glutamine + 2 ATP + H2O = carbamoyl phosphate + L-glutamate + 2 ADP + phosphate + 2 H(+). It carries out the reaction hydrogencarbonate + NH4(+) + 2 ATP = carbamoyl phosphate + 2 ADP + phosphate + 2 H(+). The protein operates within amino-acid biosynthesis; L-arginine biosynthesis; carbamoyl phosphate from bicarbonate: step 1/1. It functions in the pathway pyrimidine metabolism; UMP biosynthesis via de novo pathway; (S)-dihydroorotate from bicarbonate: step 1/3. Large subunit of the glutamine-dependent carbamoyl phosphate synthetase (CPSase). CPSase catalyzes the formation of carbamoyl phosphate from the ammonia moiety of glutamine, carbonate, and phosphate donated by ATP, constituting the first step of 2 biosynthetic pathways, one leading to arginine and/or urea and the other to pyrimidine nucleotides. The large subunit (synthetase) binds the substrates ammonia (free or transferred from glutamine from the small subunit), hydrogencarbonate and ATP and carries out an ATP-coupled ligase reaction, activating hydrogencarbonate by forming carboxy phosphate which reacts with ammonia to form carbamoyl phosphate. In Mycobacterium bovis (strain ATCC BAA-935 / AF2122/97), this protein is Carbamoyl phosphate synthase large chain.